Reading from the N-terminus, the 88-residue chain is Small ribosomal subunit protein uS15 (88 aa).

This sequence belongs to the universal ribosomal protein uS15 family. Part of the 30S ribosomal subunit. Forms a bridge to the 50S subunit in the 70S ribosome, contacting the 23S rRNA.

Functionally, one of the primary rRNA binding proteins, it binds directly to 16S rRNA where it helps nucleate assembly of the platform of the 30S subunit by binding and bridging several RNA helices of the 16S rRNA. Its function is as follows. Forms an intersubunit bridge (bridge B4) with the 23S rRNA of the 50S subunit in the ribosome. The sequence is that of Small ribosomal subunit protein uS15 from Borrelia hermsii (strain HS1 / DAH).